A 2568-amino-acid chain; its full sequence is Highly reducing polyketide synthase AN6791 (2568 aa).

A Ketosynthase family 3 (KS3) domain is found at 11 to 445 (AEPIAIVGLS…GTNAHLIVES (435 aa)). Residues Cys200, His326, and His366 each act as for beta-ketoacyl synthase activity in the active site. In terms of domain architecture, Malonyl-CoA:ACP transacylase (MAT) spans 558–882 (VFTGQGAQWY…GSLVREVSAV (325 aa)). Residues 949–1087 (HDLLGSLVLG…GLITMEPEDA (139 aa)) form an N-terminal hotdog fold region. The region spanning 949–1258 (HDLLGSLVLG…FQSVGRSAAP (310 aa)) is the PKS/mFAS DH domain. Residue His981 is the Proton acceptor; for dehydratase activity of the active site. The segment at 1104-1258 (TRRFGPSDLY…FQSVGRSAAP (155 aa)) is C-terminal hotdog fold. Catalysis depends on Asp1169, which acts as the Proton donor; for dehydratase activity. A methyltransferase (CMet) domain region spans residues 1311 to 1620 (RACLYFIYDA…EVRDCESDEW (310 aa)). Positions 1857–2174 (GLLDTIAFDD…VGKHSGKVVL (318 aa)) constitute an Enoyl reductase (ER) domain. The region spanning 2197–2375 (ASYLLVGGAG…AVSMDLGPVK (179 aa)) is the Ketoreductase (KR) domain. The 78-residue stretch at 2481–2558 (QAEKLVVEAI…ALASEVTRKS (78 aa)) folds into the Carrier domain. Ser2518 carries the O-(pantetheine 4'-phosphoryl)serine modification.

Requires pantetheine 4'-phosphate as cofactor.

It functions in the pathway secondary metabolite biosynthesis. In terms of biological role, highly reducing polyketide synthase; part of a cluster that mediates the biosynthesis of a yet undetermined secondary metabolite. With esterase AN6793, produces a pathway intermediate compound with molecular weight 258. This chain is Highly reducing polyketide synthase AN6791, found in Emericella nidulans (strain FGSC A4 / ATCC 38163 / CBS 112.46 / NRRL 194 / M139) (Aspergillus nidulans).